A 192-amino-acid polypeptide reads, in one-letter code: Ribosome maturation factor RimM (192 aa).

Positions Pro-116–Tyr-192 constitute a PRC barrel domain.

Belongs to the RimM family. In terms of assembly, binds ribosomal protein uS19.

It is found in the cytoplasm. In terms of biological role, an accessory protein needed during the final step in the assembly of 30S ribosomal subunit, possibly for assembly of the head region. Essential for efficient processing of 16S rRNA. May be needed both before and after RbfA during the maturation of 16S rRNA. It has affinity for free ribosomal 30S subunits but not for 70S ribosomes. This Verminephrobacter eiseniae (strain EF01-2) protein is Ribosome maturation factor RimM.